The primary structure comprises 78 residues: Acyl carrier protein (78 aa).

A Carrier domain is found at 1-76; that stretch reads MSLEERVKEI…DVINYLKEKV (76 aa). Ser-36 carries the O-(pantetheine 4'-phosphoryl)serine modification.

It belongs to the acyl carrier protein (ACP) family. Post-translationally, 4'-phosphopantetheine is transferred from CoA to a specific serine of apo-ACP by AcpS. This modification is essential for activity because fatty acids are bound in thioester linkage to the sulfhydryl of the prosthetic group.

It is found in the cytoplasm. It participates in lipid metabolism; fatty acid biosynthesis. In terms of biological role, carrier of the growing fatty acid chain in fatty acid biosynthesis. The polypeptide is Acyl carrier protein (Aquifex aeolicus (strain VF5)).